The following is a 119-amino-acid chain: Ribonuclease P protein component (119 aa).

This sequence belongs to the RnpA family. In terms of assembly, consists of a catalytic RNA component (M1 or rnpB) and a protein subunit.

The enzyme catalyses Endonucleolytic cleavage of RNA, removing 5'-extranucleotides from tRNA precursor.. In terms of biological role, RNaseP catalyzes the removal of the 5'-leader sequence from pre-tRNA to produce the mature 5'-terminus. It can also cleave other RNA substrates such as 4.5S RNA. The protein component plays an auxiliary but essential role in vivo by binding to the 5'-leader sequence and broadening the substrate specificity of the ribozyme. This chain is Ribonuclease P protein component, found in Mycolicibacterium paratuberculosis (strain ATCC BAA-968 / K-10) (Mycobacterium paratuberculosis).